Here is a 363-residue protein sequence, read N- to C-terminus: Zinc phosphodiesterase ELAC protein 1 (363 aa).

7 residues coordinate Zn(2+): His62, His64, Asp66, His67, His182, Asp253, and His313. Asp66 acts as the Proton acceptor in catalysis.

This sequence belongs to the RNase Z family. As to quaternary structure, homodimer. Zn(2+) is required as a cofactor. Widely expressed. Expressed in heart, brain, placenta, lung, liver, skeletal muscle, kidney and pancreas.

The protein localises to the cytoplasm. It is found in the cytosol. Its subcellular location is the nucleus. It catalyses the reaction Endonucleolytic cleavage of RNA, removing extra 3' nucleotides from tRNA precursor, generating 3' termini of tRNAs. A 3'-hydroxy group is left at the tRNA terminus and a 5'-phosphoryl group is left at the trailer molecule.. Its function is as follows. Zinc phosphodiesterase, which displays some tRNA 3'-processing endonuclease activity. Specifically involved in tRNA repair: acts downstream of the ribosome-associated quality control (RQC) pathway by removing a 2',3'-cyclic phosphate from tRNAs following cleavage by ANKZF1. tRNAs are then processed by TRNT1. This Homo sapiens (Human) protein is Zinc phosphodiesterase ELAC protein 1.